The chain runs to 287 residues: Hydroxysteroid 11-beta-dehydrogenase 1-like protein (287 aa).

An N-terminal signal peptide occupies residues 1–20 (MMKPFGKVLCAAGSLAVLLA). Residues 41 to 67 (GASA…TARR), 92 to 93 (DM), and 119 to 121 (NHI) each bind NADP(+). Serine 170 contributes to the substrate binding site. Catalysis depends on tyrosine 183, which acts as the Proton acceptor. NADP(+) is bound by residues 183 to 187 (YSATK) and 216 to 222 (GLIDTDA).

This sequence belongs to the short-chain dehydrogenases/reductases (SDR) family.

It localises to the secreted. It carries out the reaction cortisone + NADPH + H(+) = cortisol + NADP(+). Unidirectional NADP(+)-dependent cortisol dehydrogenase (in vitro). This Gallus gallus (Chicken) protein is Hydroxysteroid 11-beta-dehydrogenase 1-like protein (HSD11B1L).